We begin with the raw amino-acid sequence, 196 residues long: V-type proton ATPase subunit E (196 aa).

It belongs to the V-ATPase E subunit family.

Produces ATP from ADP in the presence of a proton gradient across the membrane. This Clostridium botulinum (strain Alaska E43 / Type E3) protein is V-type proton ATPase subunit E.